A 39-amino-acid chain; its full sequence is Photosystem II reaction center protein L (39 aa).

Residues 18–38 (SLYLGLLLVFVLGILFSSYFF) traverse the membrane as a helical segment.

This sequence belongs to the PsbL family. As to quaternary structure, PSII is composed of 1 copy each of membrane proteins PsbA, PsbB, PsbC, PsbD, PsbE, PsbF, PsbH, PsbI, PsbJ, PsbK, PsbL, PsbM, PsbT, PsbX, PsbY, Psb30/Ycf12, peripheral proteins PsbO, CyanoQ (PsbQ), PsbU, PsbV and a large number of cofactors. It forms dimeric complexes.

Its subcellular location is the cellular thylakoid membrane. One of the components of the core complex of photosystem II (PSII). PSII is a light-driven water:plastoquinone oxidoreductase that uses light energy to abstract electrons from H(2)O, generating O(2) and a proton gradient subsequently used for ATP formation. It consists of a core antenna complex that captures photons, and an electron transfer chain that converts photonic excitation into a charge separation. This subunit is found at the monomer-monomer interface and is required for correct PSII assembly and/or dimerization. This is Photosystem II reaction center protein L from Prochlorococcus marinus (strain SARG / CCMP1375 / SS120).